Reading from the N-terminus, the 678-residue chain is Glycine--tRNA ligase beta subunit (678 aa).

This sequence belongs to the class-II aminoacyl-tRNA synthetase family. In terms of assembly, tetramer of two alpha and two beta subunits.

It is found in the cytoplasm. It carries out the reaction tRNA(Gly) + glycine + ATP = glycyl-tRNA(Gly) + AMP + diphosphate. The protein is Glycine--tRNA ligase beta subunit of Streptococcus pneumoniae (strain P1031).